The following is a 358-amino-acid chain: Aromatic amino acid aminotransferase (358 aa).

K222 bears the N6-(pyridoxal phosphate)lysine mark.

Belongs to the class-II pyridoxal-phosphate-dependent aminotransferase family. As to quaternary structure, homodimer. Requires pyridoxal 5'-phosphate as cofactor.

It carries out the reaction an aromatic L-alpha-amino acid + 2-oxoglutarate = an aromatic oxo-acid + L-glutamate. Aminotransferase that catalyzes the conversion of aromatic amino acids and 2-oxoglutarate into corresponding aromatic oxo acids and L-glutamate. This chain is Aromatic amino acid aminotransferase, found in Mycobacterium sp. (strain KMS).